Here is a 975-residue protein sequence, read N- to C-terminus: MSARLPFVLRRLARPQHPGSPRRLPSLCRASSGRGSGCGGGEGLLGQQRLRDTQAGSSRGPGSPAPPARDSIVREVIQNSKEVLSLLQEKTPTFKPVLAIIQAGDDNLMQEVNQNLAEEAGLNITHICLPAESGEDEIIDEILKINEDSRVHGLALQIAETSFSNKILNALKPEKDVDGLTDVNLGKLVRGDAHECFISPVARAVIELLEKSGVSLDGKKILVIGAHGSLEATLQCLFQRKGSMTMSSQWKTPQLQGKLQEADIVVLGSPKPEEIPLSWIQPGTTVFNCSHDFLSGKAACISSGVHGISPIAEDVSLLAAALRIQNMVSSGRRWLREQQHRRWRLHCLKLQPLSPVPSDIEISRAQTPKAVEILAKEIGLLADEIEIYGKSKAKVRLSLLERLKDQADGKYVLVAGITPTPLGEGKSTVTIGLVQALTAHLNVNSFACLRQPSQGPTFGVKGGAAGGGYAQVIPMEEFNLHLTGDIHAITAANNLLAAAIDARILHENTQTDKALYNRLVPSVNGVREFSKIQLARLKRLGINKTDPSALTEEEMRKFARLDIDPSTITWQRVVDTNDRFLRKITIGQANTEKGCSRQAQFDIAVASEIMAVLALTDSLSDMKERLGRMVVASDRNGQPVTADDLGVTGALTVLMKDAIKPNLMQTLEGTPVFVHAGPFANIAHGNSSVLADKIALKLVGEGGFVVTEAGFGADIGMEKFFNIKCRASGLVPSVVVLVATVRALKMHGGGPSVTAGVPLRKEYTEENLQLVADGCCNLEKQIQIAQLFGVPVVVALNVFKTDTRAEIDLVCELAKRAGAFNAVPCYHWSIGGKGSVDLAWAVREAASKESRFQFLYDVQLPIVEKIRTIAQSVYGAKDIELSPEAQSKIDRYTEQGFGNLPICMAKTHLSLSHQPDKKGVPKGFILPISDVRASIGAGFIYPLVGTMSTMPGLPTRPCFYDIDLDTETEQVKGLF.

The transit peptide at 1–30 (MSARLPFVLRRLARPQHPGSPRRLPSLCRA) directs the protein to the mitochondrion. A disordered region spans residues 13 to 45 (ARPQHPGSPRRLPSLCRASSGRGSGCGGGEGLL). Residues 31–345 (SSGRGSGCGG…REQQHRRWRL (315 aa)) are methylenetetrahydrofolate dehydrogenase and cyclohydrolase. A compositionally biased stretch (gly residues) spans 34–44 (RGSGCGGGEGL). Residue lysine 187 is modified to N6-acetyllysine; alternate. Lysine 187 is subject to N6-succinyllysine; alternate. The segment at 346–975 (HCLKLQPLSP…TETEQVKGLF (630 aa)) is formyltetrahydrofolate synthetase. Residue serine 354 is modified to Phosphoserine. Position 420–427 (420–427 (TPLGEGKS)) interacts with ATP. Lysine 593 is subject to N6-succinyllysine.

This sequence in the N-terminal section; belongs to the tetrahydrofolate dehydrogenase/cyclohydrolase family. In the C-terminal section; belongs to the formate--tetrahydrofolate ligase family. Homodimer.

The protein localises to the mitochondrion. The catalysed reaction is (6S)-5,6,7,8-tetrahydrofolate + formate + ATP = (6R)-10-formyltetrahydrofolate + ADP + phosphate. Its pathway is one-carbon metabolism; tetrahydrofolate interconversion. Functionally, may provide the missing metabolic reaction required to link the mitochondria and the cytoplasm in the mammalian model of one-carbon folate metabolism complementing thus the enzymatic activities of MTHFD2. The polypeptide is Monofunctional C1-tetrahydrofolate synthase, mitochondrial (MTHFD1L) (Bos taurus (Bovine)).